Consider the following 179-residue polypeptide: DELTA-miturgitoxin-Cp2a (179 aa).

The N-terminal stretch at 1-20 is a signal peptide; sequence MKFSLFFGVLFLAILHSCLS. A propeptide spanning residues 21–47 is cleaved from the precursor; the sequence is ESEKDLTDEDHFRSSDSFLSEIQEESR. Positions 44-47 match the Processing quadruplet motif motif; it reads EESR. 8 disulfide bridges follow: Cys51-Cys66, Cys58-Cys75, Cys65-Cys88, Cys77-Cys86, Cys115-Cys130, Cys122-Cys139, Cys129-Cys158, and Cys141-Cys156. Val178 is modified (valine amide).

This sequence belongs to the spider toxin CSTX family. Double-CSTX subfamily. In terms of processing, cleavage of the propeptide depends on the processing quadruplet motif (XXXR, with at least one of X being E). As to expression, expressed by the venom gland.

The protein localises to the secreted. Spider venom toxin that exhibits cytolytic activity by forming an alpha-helix across the membrane. Lethal to insect larvae. The protein is DELTA-miturgitoxin-Cp2a of Cheiracanthium punctorium (Yellow sac spider).